A 121-amino-acid polypeptide reads, in one-letter code: DNA-directed RNA polymerase subunit omega (121 aa).

The disordered stretch occupies residues 95–121 (DGDAANDLQGEEDDLGLGLDEAEDLGF). The span at 103–121 (QGEEDDLGLGLDEAEDLGF) shows a compositional bias: acidic residues.

This sequence belongs to the RNA polymerase subunit omega family. As to quaternary structure, the RNAP catalytic core consists of 2 alpha, 1 beta, 1 beta' and 1 omega subunit. When a sigma factor is associated with the core the holoenzyme is formed, which can initiate transcription.

It carries out the reaction RNA(n) + a ribonucleoside 5'-triphosphate = RNA(n+1) + diphosphate. Its function is as follows. Promotes RNA polymerase assembly. Latches the N- and C-terminal regions of the beta' subunit thereby facilitating its interaction with the beta and alpha subunits. The protein is DNA-directed RNA polymerase subunit omega of Magnetococcus marinus (strain ATCC BAA-1437 / JCM 17883 / MC-1).